The sequence spans 238 residues: Response regulator receiver protein Anae109_2439 (238 aa).

2 consecutive Response regulatory domains span residues 3-117 and 121-228; these read RYLI…AAAR and LVAV…ERLH. 4-aspartylphosphate is present on residues D52 and D169.

Post-translationally, is diphosphorylated by GchK.

In terms of biological role, member of the two-component regulatory system GcHK/Anae109_2439. Is involved in a signal transduction system responding to oxygen availability. The protein is Response regulator receiver protein Anae109_2439 of Anaeromyxobacter sp. (strain Fw109-5).